The chain runs to 641 residues: Threonine--tRNA ligase (641 aa).

The TGS domain maps to 1-61 (MIKISFFDNQ…KKNGNLEILT (61 aa)). Residues 240–538 (DHKKINKELD…LVEETKGVFP (299 aa)) form a catalytic region. Zn(2+) contacts are provided by Cys-334, His-385, and His-515.

Belongs to the class-II aminoacyl-tRNA synthetase family. Homodimer. The cofactor is Zn(2+).

It localises to the cytoplasm. It carries out the reaction tRNA(Thr) + L-threonine + ATP = L-threonyl-tRNA(Thr) + AMP + diphosphate + H(+). Its function is as follows. Catalyzes the attachment of threonine to tRNA(Thr) in a two-step reaction: L-threonine is first activated by ATP to form Thr-AMP and then transferred to the acceptor end of tRNA(Thr). Also edits incorrectly charged L-seryl-tRNA(Thr). The chain is Threonine--tRNA ligase from Aster yellows witches'-broom phytoplasma (strain AYWB).